Here is a 316-residue protein sequence, read N- to C-terminus: Aspartate carbamoyltransferase catalytic subunit (316 aa).

Carbamoyl phosphate contacts are provided by arginine 58 and threonine 59. Residue lysine 86 participates in L-aspartate binding. The carbamoyl phosphate site is built by arginine 108, histidine 136, and glutamine 139. L-aspartate is bound by residues arginine 169 and arginine 223. The carbamoyl phosphate site is built by glycine 265 and proline 266.

It belongs to the aspartate/ornithine carbamoyltransferase superfamily. ATCase family. In terms of assembly, heterododecamer (2C3:3R2) of six catalytic PyrB chains organized as two trimers (C3), and six regulatory PyrI chains organized as three dimers (R2).

It catalyses the reaction carbamoyl phosphate + L-aspartate = N-carbamoyl-L-aspartate + phosphate + H(+). It functions in the pathway pyrimidine metabolism; UMP biosynthesis via de novo pathway; (S)-dihydroorotate from bicarbonate: step 2/3. Functionally, catalyzes the condensation of carbamoyl phosphate and aspartate to form carbamoyl aspartate and inorganic phosphate, the committed step in the de novo pyrimidine nucleotide biosynthesis pathway. This chain is Aspartate carbamoyltransferase catalytic subunit, found in Anaeromyxobacter sp. (strain Fw109-5).